The sequence spans 312 residues: Ribosomal RNA small subunit methyltransferase H (312 aa).

S-adenosyl-L-methionine contacts are provided by residues 34-36 (GGH), Asp54, Leu83, Asp99, and Gln106.

It belongs to the methyltransferase superfamily. RsmH family.

It localises to the cytoplasm. The catalysed reaction is cytidine(1402) in 16S rRNA + S-adenosyl-L-methionine = N(4)-methylcytidine(1402) in 16S rRNA + S-adenosyl-L-homocysteine + H(+). Its function is as follows. Specifically methylates the N4 position of cytidine in position 1402 (C1402) of 16S rRNA. This Rubrobacter xylanophilus (strain DSM 9941 / JCM 11954 / NBRC 16129 / PRD-1) protein is Ribosomal RNA small subunit methyltransferase H.